Consider the following 334-residue polypeptide: Cobalt-precorrin-5B C(1)-methyltransferase (334 aa).

This sequence belongs to the CbiD family.

The enzyme catalyses Co-precorrin-5B + S-adenosyl-L-methionine = Co-precorrin-6A + S-adenosyl-L-homocysteine. It participates in cofactor biosynthesis; adenosylcobalamin biosynthesis; cob(II)yrinate a,c-diamide from sirohydrochlorin (anaerobic route): step 6/10. Its function is as follows. Catalyzes the methylation of C-1 in cobalt-precorrin-5B to form cobalt-precorrin-6A. This chain is Cobalt-precorrin-5B C(1)-methyltransferase, found in Methanoregula boonei (strain DSM 21154 / JCM 14090 / 6A8).